The sequence spans 101 residues: uncharacterized protein (101 aa).

A helical membrane pass occupies residues 77-99 (VFSFMNGFTDGCICGTIIILCLI).

The protein localises to the membrane. This is an uncharacterized protein from Acanthamoeba polyphaga mimivirus (APMV).